A 307-amino-acid chain; its full sequence is Malate dehydrogenase (307 aa).

NAD(+)-binding positions include 8–13 (GAGNVG) and Asp32. Positions 81 and 87 each coordinate substrate. Residues Asn94 and 117–119 (VSN) contribute to the NAD(+) site. Substrate-binding residues include Asn119 and Arg150. The active-site Proton acceptor is the His174.

The protein belongs to the LDH/MDH superfamily. MDH type 3 family.

It carries out the reaction (S)-malate + NAD(+) = oxaloacetate + NADH + H(+). Its function is as follows. Catalyzes the reversible oxidation of malate to oxaloacetate. This is Malate dehydrogenase from Dehalococcoides mccartyi (strain ATCC BAA-2266 / KCTC 15142 / 195) (Dehalococcoides ethenogenes (strain 195)).